A 165-amino-acid polypeptide reads, in one-letter code: UPF0303 protein BMA1246 (165 aa).

The protein belongs to the UPF0303 family.

This is UPF0303 protein BMA1246 from Burkholderia mallei (strain ATCC 23344).